A 131-amino-acid chain; its full sequence is Profilin-2 (131 aa).

It belongs to the profilin family. As to quaternary structure, occurs in many kinds of cells as a complex with monomeric actin in a 1:1 ratio. In terms of tissue distribution, expressed in the intestinal wall, the spermatheca, and the pharynx.

The protein resides in the cytoplasm. It localises to the cytoskeleton. In terms of biological role, binds to actin and affects the structure of the cytoskeleton. At high concentrations, profilin prevents the polymerization of actin, whereas it enhances it at low concentrations. By binding to PIP2, it inhibits the formation of IP3 and DG. In Caenorhabditis elegans, this protein is Profilin-2 (pfn-2).